A 94-amino-acid chain; its full sequence is Putative pterin-4-alpha-carbinolamine dehydratase (94 aa).

Belongs to the pterin-4-alpha-carbinolamine dehydratase family.

The catalysed reaction is (4aS,6R)-4a-hydroxy-L-erythro-5,6,7,8-tetrahydrobiopterin = (6R)-L-erythro-6,7-dihydrobiopterin + H2O. The chain is Putative pterin-4-alpha-carbinolamine dehydratase from Chloroflexus aggregans (strain MD-66 / DSM 9485).